A 338-amino-acid chain; its full sequence is Phosphatidylglycerol--prolipoprotein diacylglyceryl transferase (338 aa).

4 helical membrane-spanning segments follow: residues 24 to 44 (WYGL…SYQV), 67 to 87 (LFIW…TLVY), 115 to 135 (GFQG…VILW), and 141 to 161 (FKFA…YTFG). An a 1,2-diacyl-sn-glycero-3-phospho-(1'-sn-glycerol)-binding site is contributed by Arg162. A run of 3 helical transmembrane segments spans residues 224–244 (PSQL…LWLL), 252–272 (GFLV…IEYF), and 304–324 (GQIL…ILYL).

The protein belongs to the Lgt family.

The protein resides in the cell inner membrane. It catalyses the reaction L-cysteinyl-[prolipoprotein] + a 1,2-diacyl-sn-glycero-3-phospho-(1'-sn-glycerol) = an S-1,2-diacyl-sn-glyceryl-L-cysteinyl-[prolipoprotein] + sn-glycerol 1-phosphate + H(+). It participates in protein modification; lipoprotein biosynthesis (diacylglyceryl transfer). Its function is as follows. Catalyzes the transfer of the diacylglyceryl group from phosphatidylglycerol to the sulfhydryl group of the N-terminal cysteine of a prolipoprotein, the first step in the formation of mature lipoproteins. The sequence is that of Phosphatidylglycerol--prolipoprotein diacylglyceryl transferase from Treponema denticola (strain ATCC 35405 / DSM 14222 / CIP 103919 / JCM 8153 / KCTC 15104).